The primary structure comprises 134 residues: Translation initiation factor 5A (134 aa).

At Lys36 the chain carries Hypusine.

It belongs to the eIF-5A family.

It is found in the cytoplasm. In terms of biological role, functions by promoting the formation of the first peptide bond. This chain is Translation initiation factor 5A (eIF5A), found in Korarchaeum cryptofilum (strain OPF8).